The following is a 422-amino-acid chain: Glutamate-1-semialdehyde 2,1-aminomutase (422 aa).

At K258 the chain carries N6-(pyridoxal phosphate)lysine.

It belongs to the class-III pyridoxal-phosphate-dependent aminotransferase family. HemL subfamily. Homodimer. The cofactor is pyridoxal 5'-phosphate.

It is found in the cytoplasm. The enzyme catalyses (S)-4-amino-5-oxopentanoate = 5-aminolevulinate. Its pathway is porphyrin-containing compound metabolism; protoporphyrin-IX biosynthesis; 5-aminolevulinate from L-glutamyl-tRNA(Glu): step 2/2. This is Glutamate-1-semialdehyde 2,1-aminomutase from Chlamydia muridarum (strain MoPn / Nigg).